We begin with the raw amino-acid sequence, 235 residues long: Class B acid phosphatase (235 aa).

The first 22 residues, 1 to 22, serve as a signal peptide directing secretion; that stretch reads MKNLLKLSAIAILAASAVSTFA. The active-site Nucleophile is the D67. The Mg(2+) site is built by D67 and D69. D69 functions as the Proton donor in the catalytic mechanism. Residues 135 to 136 and K175 contribute to the substrate site; that span reads TG. Residue D190 coordinates Mg(2+).

Belongs to the class B bacterial acid phosphatase family. In terms of assembly, homotetramer. The cofactor is Mg(2+).

The protein localises to the periplasm. The enzyme catalyses a phosphate monoester + H2O = an alcohol + phosphate. In terms of biological role, dephosphorylates several organic phosphate monoesters. Also has a phosphotransferase activity catalyzing the transfer of low-energy phosphate groups from organic phosphate monoesters to free hydroxyl groups of various organic compounds. This is Class B acid phosphatase from Haemophilus parainfluenzae (strain T3T1).